A 417-amino-acid chain; its full sequence is UDP-N-acetylglucosamine 1-carboxyvinyltransferase (417 aa).

A phosphoenolpyruvate-binding site is contributed by 22 to 23 (KN). Arg-92 is a UDP-N-acetyl-alpha-D-glucosamine binding site. The active-site Proton donor is the Cys-116. Residue Cys-116 is modified to 2-(S-cysteinyl)pyruvic acid O-phosphothioketal. The UDP-N-acetyl-alpha-D-glucosamine site is built by Asp-304 and Ile-326.

Belongs to the EPSP synthase family. MurA subfamily.

Its subcellular location is the cytoplasm. It carries out the reaction phosphoenolpyruvate + UDP-N-acetyl-alpha-D-glucosamine = UDP-N-acetyl-3-O-(1-carboxyvinyl)-alpha-D-glucosamine + phosphate. The protein operates within cell wall biogenesis; peptidoglycan biosynthesis. Functionally, cell wall formation. Adds enolpyruvyl to UDP-N-acetylglucosamine. This is UDP-N-acetylglucosamine 1-carboxyvinyltransferase from Geotalea uraniireducens (strain Rf4) (Geobacter uraniireducens).